A 69-amino-acid polypeptide reads, in one-letter code: U-Asilidin(12)-Dg3a (69 aa).

The signal sequence occupies residues 1-19; that stretch reads MRFLNIFLFFAAIIAFATA. A propeptide spanning residues 20-33 is cleaved from the precursor; the sequence is SQVFEEDEIDMEPR. Intrachain disulfides connect cysteine 36/cysteine 59, cysteine 45/cysteine 65, and cysteine 49/cysteine 67.

The protein belongs to the asilidin-12 family. Expressed by the venom gland.

The protein localises to the secreted. Functionally, moderately increases Kv11.1/KCNH2/ERG1 currents and shifts the voltage-dependence of the channel activation to hyperpolarised potentials. In vivo, induces neurotoxic effects when injected into insects (tested on L.cuprina and A.domesticus). The polypeptide is U-Asilidin(12)-Dg3a (Dolopus genitalis (Giant Australian assassin fly)).